The primary structure comprises 185 residues: Ribosome-recycling factor (185 aa).

It belongs to the RRF family.

The protein resides in the cytoplasm. In terms of biological role, responsible for the release of ribosomes from messenger RNA at the termination of protein biosynthesis. May increase the efficiency of translation by recycling ribosomes from one round of translation to another. This chain is Ribosome-recycling factor, found in Clostridium botulinum (strain Eklund 17B / Type B).